A 187-amino-acid chain; its full sequence is NADH-dependent FMN reductase SfnF (187 aa).

The protein belongs to the SsuE family.

It catalyses the reaction FMNH2 + NAD(+) = FMN + NADH + 2 H(+). Its function is as follows. Involved in the dimethyl sulfide degradation pathway. Catalyzes the NADH-dependent reduction of FMN. The polypeptide is NADH-dependent FMN reductase SfnF (Pseudomonas fluorescens (strain Pf0-1)).